We begin with the raw amino-acid sequence, 244 residues long: 1-(5-phosphoribosyl)-5-[(5-phosphoribosylamino)methylideneamino] imidazole-4-carboxamide isomerase (244 aa).

Catalysis depends on D8, which acts as the Proton acceptor. The Proton donor role is filled by D129.

Belongs to the HisA/HisF family.

It is found in the cytoplasm. The enzyme catalyses 1-(5-phospho-beta-D-ribosyl)-5-[(5-phospho-beta-D-ribosylamino)methylideneamino]imidazole-4-carboxamide = 5-[(5-phospho-1-deoxy-D-ribulos-1-ylimino)methylamino]-1-(5-phospho-beta-D-ribosyl)imidazole-4-carboxamide. The protein operates within amino-acid biosynthesis; L-histidine biosynthesis; L-histidine from 5-phospho-alpha-D-ribose 1-diphosphate: step 4/9. This is 1-(5-phosphoribosyl)-5-[(5-phosphoribosylamino)methylideneamino] imidazole-4-carboxamide isomerase from Chelativorans sp. (strain BNC1).